A 621-amino-acid chain; its full sequence is Na(+)/H(+) antiporter NhaA (621 aa).

The segment at 1–430 is na(+)/H(+) antiporter NhaA; it reads MPASSFGESS…LGWLIFKVAA (430 aa). 11 helical membrane-spanning segments follow: residues 27–47, 72–92, 109–129, 139–159, 168–188, 192–212, 223–243, 300–320, 339–359, 375–395, and 409–429; these read GAAV…NSPL, LHHW…GLEV, LALI…VLIV, GWGA…AIVG, VFLL…IGIV, EIRI…WLLG, VLIV…ASLA, FLRL…NAGV, VIAG…LVAV, VFGG…IIGL, and VGVL…FKVA. In terms of domain architecture, Thioredoxin spans 431–578; that stretch reads QRWGEKTADL…VERDLASAVA (148 aa).

The protein in the N-terminal section; belongs to the NhaA Na(+)/H(+) (TC 2.A.33) antiporter family.

It is found in the cell inner membrane. The enzyme catalyses Na(+)(in) + 2 H(+)(out) = Na(+)(out) + 2 H(+)(in). In terms of biological role, na(+)/H(+) antiporter that extrudes sodium in exchange for external protons. This Herminiimonas arsenicoxydans protein is Na(+)/H(+) antiporter NhaA.